Consider the following 396-residue polypeptide: Phosphoglycerate kinase (396 aa).

Residues 21–23 (DLN), arginine 36, 59–62 (HFGR), arginine 118, and arginine 151 each bind substrate. ATP contacts are provided by residues lysine 201, glutamate 323, and 353–356 (GGDT).

It belongs to the phosphoglycerate kinase family. Monomer.

It is found in the cytoplasm. It carries out the reaction (2R)-3-phosphoglycerate + ATP = (2R)-3-phospho-glyceroyl phosphate + ADP. Its pathway is carbohydrate degradation; glycolysis; pyruvate from D-glyceraldehyde 3-phosphate: step 2/5. This chain is Phosphoglycerate kinase, found in Brucella melitensis biotype 1 (strain ATCC 23456 / CCUG 17765 / NCTC 10094 / 16M).